A 609-amino-acid polypeptide reads, in one-letter code: Glutamine--fructose-6-phosphate aminotransferase [isomerizing] (609 aa).

The active-site Nucleophile; for GATase activity is C2. The region spanning 2–217 is the Glutamine amidotransferase type-2 domain; the sequence is CGIVGAIAGR…DGDTAEIRRD (216 aa). SIS domains follow at residues 285–425 and 458–599; these read AESV…LRGA and WAEC…VDKP. The For Fru-6P isomerization activity role is filled by K604.

As to quaternary structure, homodimer.

The protein localises to the cytoplasm. The catalysed reaction is D-fructose 6-phosphate + L-glutamine = D-glucosamine 6-phosphate + L-glutamate. Its function is as follows. Catalyzes the first step in hexosamine metabolism, converting fructose-6P into glucosamine-6P using glutamine as a nitrogen source. The polypeptide is Glutamine--fructose-6-phosphate aminotransferase [isomerizing] (Xylella fastidiosa (strain Temecula1 / ATCC 700964)).